The primary structure comprises 501 residues: MNKKNIMFLGTASSVGKSTLVAALCRVLKNEDFKVSPFKAMNISLNSYVTKDGAEMGRAQVVQAEASKIEPSALMNPILLKPSGGHTQVIVNGKVYDNIEPYEYKELNKKLKGIVKESYDRISNEYDLIVLEGSGGCAEINLKDTDIANMNMAECVDAPVILVADIDRGGVFASIVGTLNLLSENERKRVKGVIINKFRGKKEYFEPGVKQLEDIIKIPVLGVMPYEYFDIDDEDSVTEKISNKESTEAKNIDIAIIRLSHMSNFTDFNVLNRINGVNIRYVESTKYLKNPDVIIIPGTKNTIEDLRILKESKLANEIIKLHESGTLVFGICGGYQMLGKLLLDQQGVEGSTFQEEGLGLLDIKTRFNERKVTKQVEAQVVSNLKHINEIENKSLVGYEIHNGISKVGKNAKPFIKDSKGKIIGVCDMEGSVAGTYLHGIFDSEEFTNSFINALKKNNNFELLENDELDKVSDYKNEQYEKLAKVFSDNIDVSKIKEIMGI.

One can recognise a GATase cobBQ-type domain in the interval 251 to 446; the sequence is NIDIAIIRLS…LHGIFDSEEF (196 aa). The active-site Nucleophile is C332. Residue H438 is part of the active site.

This sequence belongs to the CobB/CobQ family. CobQ subfamily.

Its pathway is cofactor biosynthesis; adenosylcobalamin biosynthesis. Functionally, catalyzes amidations at positions B, D, E, and G on adenosylcobyrinic A,C-diamide. NH(2) groups are provided by glutamine, and one molecule of ATP is hydrogenolyzed for each amidation. This chain is Cobyric acid synthase, found in Clostridium botulinum (strain Alaska E43 / Type E3).